An 886-amino-acid polypeptide reads, in one-letter code: DNA mismatch repair protein MutS (886 aa).

627–634 (GPNMGGKS) serves as a coordination point for ATP. The disordered stretch occupies residues 834–857 (VECADAPAPSDATHPALDRLRDID).

This sequence belongs to the DNA mismatch repair MutS family.

Its function is as follows. This protein is involved in the repair of mismatches in DNA. It is possible that it carries out the mismatch recognition step. This protein has a weak ATPase activity. The chain is DNA mismatch repair protein MutS from Burkholderia vietnamiensis (strain G4 / LMG 22486) (Burkholderia cepacia (strain R1808)).